The following is a 287-amino-acid chain: ATP synthase gamma chain (287 aa).

This sequence belongs to the ATPase gamma chain family. In terms of assembly, F-type ATPases have 2 components, CF(1) - the catalytic core - and CF(0) - the membrane proton channel. CF(1) has five subunits: alpha(3), beta(3), gamma(1), delta(1), epsilon(1). CF(0) has three main subunits: a, b and c.

Its subcellular location is the cell inner membrane. Functionally, produces ATP from ADP in the presence of a proton gradient across the membrane. The gamma chain is believed to be important in regulating ATPase activity and the flow of protons through the CF(0) complex. The polypeptide is ATP synthase gamma chain (Shigella sonnei (strain Ss046)).